Here is a 575-residue protein sequence, read N- to C-terminus: Flagellin B (575 aa).

It belongs to the bacterial flagellin family. As to quaternary structure, heteromer of flaA and flaB.

The protein localises to the secreted. It is found in the bacterial flagellum. In terms of biological role, flagellin is the subunit protein which polymerizes to form the filaments of bacterial flagella. This chain is Flagellin B (flaB), found in Campylobacter jejuni.